A 196-amino-acid chain; its full sequence is Imidazoleglycerol-phosphate dehydratase (196 aa).

The protein belongs to the imidazoleglycerol-phosphate dehydratase family.

The protein resides in the cytoplasm. It carries out the reaction D-erythro-1-(imidazol-4-yl)glycerol 3-phosphate = 3-(imidazol-4-yl)-2-oxopropyl phosphate + H2O. Its pathway is amino-acid biosynthesis; L-histidine biosynthesis; L-histidine from 5-phospho-alpha-D-ribose 1-diphosphate: step 6/9. The chain is Imidazoleglycerol-phosphate dehydratase from Clostridium novyi (strain NT).